The primary structure comprises 111 residues: Small ribosomal subunit protein uS17 (111 aa).

This sequence belongs to the universal ribosomal protein uS17 family. As to quaternary structure, part of the 30S ribosomal subunit.

In terms of biological role, one of the primary rRNA binding proteins, it binds specifically to the 5'-end of 16S ribosomal RNA. In Methanocella arvoryzae (strain DSM 22066 / NBRC 105507 / MRE50), this protein is Small ribosomal subunit protein uS17.